A 339-amino-acid polypeptide reads, in one-letter code: GTP 3',8-cyclase (339 aa).

The 237-residue stretch at 13 to 249 (RYGRPLRDLR…GEVAQRHAFA (237 aa)) folds into the Radical SAM core domain. R22 is a binding site for GTP. [4Fe-4S] cluster contacts are provided by C29 and C33. Y35 provides a ligand contact to S-adenosyl-L-methionine. Residue C36 coordinates [4Fe-4S] cluster. Position 75 (R75) interacts with GTP. An S-adenosyl-L-methionine-binding site is contributed by G79. A GTP-binding site is contributed by T106. An S-adenosyl-L-methionine-binding site is contributed by S130. K168 is a GTP binding site. M202 contributes to the S-adenosyl-L-methionine binding site. C266 and C269 together coordinate [4Fe-4S] cluster. 271 to 273 (RAR) is a binding site for GTP. C283 contributes to the [4Fe-4S] cluster binding site.

The protein belongs to the radical SAM superfamily. MoaA family. In terms of assembly, monomer and homodimer. The cofactor is [4Fe-4S] cluster.

The catalysed reaction is GTP + AH2 + S-adenosyl-L-methionine = (8S)-3',8-cyclo-7,8-dihydroguanosine 5'-triphosphate + 5'-deoxyadenosine + L-methionine + A + H(+). The protein operates within cofactor biosynthesis; molybdopterin biosynthesis. In terms of biological role, catalyzes the cyclization of GTP to (8S)-3',8-cyclo-7,8-dihydroguanosine 5'-triphosphate. This chain is GTP 3',8-cyclase, found in Xanthomonas campestris pv. campestris (strain B100).